A 191-amino-acid polypeptide reads, in one-letter code: Pyridoxal 5'-phosphate synthase subunit PdxT (191 aa).

G46 to S48 is a binding site for L-glutamine. C78 functions as the Nucleophile in the catalytic mechanism. L-glutamine-binding positions include R105 and I134–R135. Catalysis depends on charge relay system residues H170 and E172.

Belongs to the glutaminase PdxT/SNO family. As to quaternary structure, in the presence of PdxS, forms a dodecamer of heterodimers. Only shows activity in the heterodimer.

It carries out the reaction aldehydo-D-ribose 5-phosphate + D-glyceraldehyde 3-phosphate + L-glutamine = pyridoxal 5'-phosphate + L-glutamate + phosphate + 3 H2O + H(+). It catalyses the reaction L-glutamine + H2O = L-glutamate + NH4(+). It functions in the pathway cofactor biosynthesis; pyridoxal 5'-phosphate biosynthesis. In terms of biological role, catalyzes the hydrolysis of glutamine to glutamate and ammonia as part of the biosynthesis of pyridoxal 5'-phosphate. The resulting ammonia molecule is channeled to the active site of PdxS. In Carboxydothermus hydrogenoformans (strain ATCC BAA-161 / DSM 6008 / Z-2901), this protein is Pyridoxal 5'-phosphate synthase subunit PdxT.